Consider the following 297-residue polypeptide: MTSLAAPQTGLLRQYLVLTKPRVTQLAVFCAIIGMFLAVPGLPDPGRVVFGTLGIWLLAAAAFAINCLIEQEIDARMLRTARRATARGTISAAQVISLSGLLGGAGMLVLYHLVNPLTMWLTFATFVGYAIIYTVILKPRTPQNIVIGGLSGAMPPALGWAAVADAVPAEAWVLVLIIFIWTPPHFWALALYRNHDYAKAGLPMLPVTHGQRFTRLHILLYSLALVATTTLPYIIRMSGLLYLASALALGGMFVAYAWRLYREYSDALARRLFRFSILYLALLFAALLMDHWAGLLA.

The next 9 membrane-spanning stretches (helical) occupy residues 23–43 (VTQL…PGLP), 49–69 (VFGT…NCLI), 90–110 (ISAA…MLVL), 117–137 (LTMW…TVIL), 144–164 (NIVI…AAVA), 171–191 (AWVL…ALAL), 215–235 (RLHI…PYII), 238–258 (SGLL…AYAW), and 277–297 (ILYL…GLLA).

The protein belongs to the UbiA prenyltransferase family. Protoheme IX farnesyltransferase subfamily.

It localises to the cell inner membrane. The enzyme catalyses heme b + (2E,6E)-farnesyl diphosphate + H2O = Fe(II)-heme o + diphosphate. It functions in the pathway porphyrin-containing compound metabolism; heme O biosynthesis; heme O from protoheme: step 1/1. Its function is as follows. Converts heme B (protoheme IX) to heme O by substitution of the vinyl group on carbon 2 of heme B porphyrin ring with a hydroxyethyl farnesyl side group. The protein is Protoheme IX farnesyltransferase of Bordetella petrii (strain ATCC BAA-461 / DSM 12804 / CCUG 43448).